The following is a 324-amino-acid chain: Malate dehydrogenase (324 aa).

NAD(+)-binding positions include 21–26 (GAGRVG) and aspartate 45. Residues arginine 94 and arginine 100 each coordinate substrate. NAD(+) contacts are provided by residues asparagine 107 and 130–132 (VTN). Residues asparagine 132 and arginine 163 each coordinate substrate. Histidine 187 (proton acceptor) is an active-site residue.

This sequence belongs to the LDH/MDH superfamily. MDH type 3 family.

It catalyses the reaction (S)-malate + NAD(+) = oxaloacetate + NADH + H(+). Its function is as follows. Catalyzes the reversible oxidation of malate to oxaloacetate. The chain is Malate dehydrogenase from Trichormus variabilis (strain ATCC 29413 / PCC 7937) (Anabaena variabilis).